The chain runs to 127 residues: MELWVKIGDEKKKYQGSFQSVMENLVKDGRGKEIQILCMHAPPRERRRFKRELRWYDKDILKTASAIARWFYLREYRRIRRRIKELKNRAKYISKGEIAYNPKIMKEVEALKEKLSEIEKKIEELKV.

Positions 71-126 (FYLREYRRIRRRIKELKNRAKYISKGEIAYNPKIMKEVEALKEKLSEIEKKIEELK) form a coiled coil.

This is an uncharacterized protein from Aquifex aeolicus (strain VF5).